Here is a 252-residue protein sequence, read N- to C-terminus: MMLHAQNMPGQSGMPWLVFLHGFSGDCREWQPVGEQFHTCSRLYIDLPGHGGSAAIPVGGFADVFQLLRATLISYNILKFWLVGYSLGGRVAMMAACQGIPGLCGLVVEGGHPGLQNEQARAERRLSDGRWAERFRREPLSTVFHDWYQQSVFTSLTAQQRQALTALRSQNNGETLAAMLEATSLAAQPDLREALNALTFPFYYLCGERDSKFRALAQEVAATCHVIRNAGHNAHRENPAGVVDSLAQILRL.

It belongs to the AB hydrolase superfamily. MenH family. In terms of assembly, monomer.

It carries out the reaction 5-enolpyruvoyl-6-hydroxy-2-succinyl-cyclohex-3-ene-1-carboxylate = (1R,6R)-6-hydroxy-2-succinyl-cyclohexa-2,4-diene-1-carboxylate + pyruvate. Its pathway is quinol/quinone metabolism; 1,4-dihydroxy-2-naphthoate biosynthesis; 1,4-dihydroxy-2-naphthoate from chorismate: step 3/7. It functions in the pathway quinol/quinone metabolism; menaquinone biosynthesis. In terms of biological role, catalyzes a proton abstraction reaction that results in 2,5-elimination of pyruvate from 2-succinyl-5-enolpyruvyl-6-hydroxy-3-cyclohexene-1-carboxylate (SEPHCHC) and the formation of 2-succinyl-6-hydroxy-2,4-cyclohexadiene-1-carboxylate (SHCHC). In Salmonella arizonae (strain ATCC BAA-731 / CDC346-86 / RSK2980), this protein is 2-succinyl-6-hydroxy-2,4-cyclohexadiene-1-carboxylate synthase.